The sequence spans 336 residues: F420-dependent glucose-6-phosphate dehydrogenase (336 aa).

Asp39 serves as a coordination point for coenzyme F420-(gamma-Glu)n. His40 (proton donor) is an active-site residue. Coenzyme F420-(gamma-Glu)n-binding positions include Thr76 and 107–108 (TG). Residue Glu109 is the Proton acceptor of the active site. Coenzyme F420-(gamma-Glu)n contacts are provided by residues Asn112, 177–178 (GG), and 180–181 (LV). Substrate is bound by residues Thr195, Lys198, Lys259, and Arg283.

This sequence belongs to the F420-dependent glucose-6-phosphate dehydrogenase family. Homodimer.

The catalysed reaction is oxidized coenzyme F420-(gamma-L-Glu)(n) + D-glucose 6-phosphate + H(+) = 6-phospho-D-glucono-1,5-lactone + reduced coenzyme F420-(gamma-L-Glu)(n). In terms of biological role, catalyzes the coenzyme F420-dependent oxidation of glucose 6-phosphate (G6P) to 6-phosphogluconolactone. The polypeptide is F420-dependent glucose-6-phosphate dehydrogenase (Nocardia farcinica (strain IFM 10152)).